The chain runs to 85 residues: UPF0335 protein WP0746 (85 aa).

It belongs to the UPF0335 family.

In Wolbachia pipientis subsp. Culex pipiens (strain wPip), this protein is UPF0335 protein WP0746.